We begin with the raw amino-acid sequence, 215 residues long: Probable phosphoglycerate mutase GpmB (215 aa).

Residues 8 to 15 (RHGETEWN), 21 to 22 (QG), Arg-58, Arg-60, 82 to 85 (ELHM), and 151 to 152 (GI) contribute to the substrate site. His-9 serves as the catalytic Tele-phosphohistidine intermediate. Glu-82 acts as the Proton donor/acceptor in catalysis.

Belongs to the phosphoglycerate mutase family. GpmB subfamily.

It carries out the reaction (2R)-2-phosphoglycerate = (2R)-3-phosphoglycerate. It participates in carbohydrate degradation; glycolysis; pyruvate from D-glyceraldehyde 3-phosphate: step 3/5. This is Probable phosphoglycerate mutase GpmB from Serratia proteamaculans (strain 568).